Here is a 456-residue protein sequence, read N- to C-terminus: ATP synthase subunit beta 1 (456 aa).

152–159 (GGAGVGKS) provides a ligand contact to ATP.

Belongs to the ATPase alpha/beta chains family. As to quaternary structure, F-type ATPases have 2 components, CF(1) - the catalytic core - and CF(0) - the membrane proton channel. CF(1) has five subunits: alpha(3), beta(3), gamma(1), delta(1), epsilon(1). CF(0) has three main subunits: a(1), b(2) and c(9-12). The alpha and beta chains form an alternating ring which encloses part of the gamma chain. CF(1) is attached to CF(0) by a central stalk formed by the gamma and epsilon chains, while a peripheral stalk is formed by the delta and b chains.

Its subcellular location is the cell membrane. The catalysed reaction is ATP + H2O + 4 H(+)(in) = ADP + phosphate + 5 H(+)(out). Produces ATP from ADP in the presence of a proton gradient across the membrane. The catalytic sites are hosted primarily by the beta subunits. In Listeria welshimeri serovar 6b (strain ATCC 35897 / DSM 20650 / CCUG 15529 / CIP 8149 / NCTC 11857 / SLCC 5334 / V8), this protein is ATP synthase subunit beta 1.